The primary structure comprises 317 residues: MSGSIDTLALKEEDVTKFLACASHLGANNVDFQMEQYVYKRRPDGTSIINVRKTWEKVLLAARAIAAIENPADICVISARPYGQRAVLKFAHYTGATPIAGRFTPGTFTNQIQTAFREPRLLVVTDPYTDHQPVTEASYVNIPVIALTNTDSPLKYVDIAIPCNNKSIHSVGLMWWMLAREVLRLRGTISREVPWEVMVDLFFYRDPEEAEKEAQAEQAAAEKDKAPKEEFTADQAFTAPGTEVSDWASEVPVAPVPILAGGVDAATTEDWSVPAQSDWTAPAANPANAAAAGAPAPAPAAATTTESWGGSGAENWG.

The segment at 277-317 is disordered; that stretch reads SDWTAPAANPANAAAAGAPAPAPAAATTTESWGGSGAENWG. Residues 281–302 show a composition bias toward low complexity; the sequence is APAANPANAAAAGAPAPAPAAA.

This sequence belongs to the universal ribosomal protein uS2 family. In terms of assembly, component of the small ribosomal subunit. Mature ribosomes consist of a small (40S) and a large (60S) subunit. The 40S subunit contains about 33 different proteins and 1 molecule of RNA (18S). The 60S subunit contains about 49 different proteins and 3 molecules of RNA (28S, 5.8S and 5S). Interacts with ribosomal protein S21.

The protein localises to the cytoplasm. Its function is as follows. Required for the assembly and/or stability of the 40S ribosomal subunit. Required for the processing of the 20S rRNA-precursor to mature 18S rRNA in a late step of the maturation of 40S ribosomal subunits. In Urechis caupo (Innkeeper worm), this protein is Small ribosomal subunit protein uS2.